Reading from the N-terminus, the 166-residue chain is Arginine repressor (166 aa).

Belongs to the ArgR family.

The protein resides in the cytoplasm. It participates in amino-acid biosynthesis; L-arginine biosynthesis [regulation]. Regulates arginine biosynthesis genes. This is Arginine repressor from Mycobacterium ulcerans (strain Agy99).